The following is a 1075-amino-acid chain: DNA-directed RNA polymerase subunit beta (1075 aa).

It belongs to the RNA polymerase beta chain family. In terms of assembly, in plastids the minimal PEP RNA polymerase catalytic core is composed of four subunits: alpha, beta, beta', and beta''. When a (nuclear-encoded) sigma factor is associated with the core the holoenzyme is formed, which can initiate transcription.

The protein localises to the plastid. Its subcellular location is the chloroplast. The enzyme catalyses RNA(n) + a ribonucleoside 5'-triphosphate = RNA(n+1) + diphosphate. Functionally, DNA-dependent RNA polymerase catalyzes the transcription of DNA into RNA using the four ribonucleoside triphosphates as substrates. This is DNA-directed RNA polymerase subunit beta from Pinus thunbergii (Japanese black pine).